The primary structure comprises 120 residues: Large ribosomal subunit protein uL18 (120 aa).

Belongs to the universal ribosomal protein uL18 family. Part of the 50S ribosomal subunit; part of the 5S rRNA/L5/L18/L25 subcomplex. Contacts the 5S and 23S rRNAs.

Functionally, this is one of the proteins that bind and probably mediate the attachment of the 5S RNA into the large ribosomal subunit, where it forms part of the central protuberance. In Bacillus pumilus (strain SAFR-032), this protein is Large ribosomal subunit protein uL18.